Consider the following 361-residue polypeptide: Sensor protein VanSC (361 aa).

2 helical membrane passes run 16–36 and 59–79; these read FVTT…IRFI and WLFC…IYYM. In terms of domain architecture, Histidine kinase spans 144–359; that stretch reads YLAHDLRTPL…IFNVRLPKPA (216 aa). Phosphohistidine; by autocatalysis is present on His147. Mg(2+) is bound at residue Glu252.

Autophosphorylated.

It localises to the membrane. It carries out the reaction ATP + protein L-histidine = ADP + protein N-phospho-L-histidine.. The polypeptide is Sensor protein VanSC (Enterococcus gallinarum).